The sequence spans 266 residues: MDSMNVPEVLEIKRIVEESESVKTFIFSWDFRREVRPGQFVMVWDFRDEKPMSVSLIDPVRSEIGISIRRVGEFTDRVHGLSEGDLLGIRGPYGRGFELMGRDILLVGGGIGMAPLAALADEATARGMRVDALVAARTADELLFLDRLEAAGVNISTCTDDGSCGFKGFAHERLLTLEENHDMAAVCGPEPMMFQVMRILDERDVPAQLSLERYMKCAVGICGQCCLDDTGFRVCAEGPVFWSQELSRVREFGRYRRDPAGRRVPW.

The 95-residue stretch at 5–99 folds into the FAD-binding FR-type domain; sequence NVPEVLEIKR…RGPYGRGFEL (95 aa). 4 residues coordinate [2Fe-2S] cluster: Cys217, Cys222, Cys225, and Cys235.

The protein belongs to the PyrK family. As to quaternary structure, heterotetramer of 2 PyrK and 2 PyrD type B subunits. The cofactor is [2Fe-2S] cluster. FAD serves as cofactor.

It participates in pyrimidine metabolism; UMP biosynthesis via de novo pathway; orotate from (S)-dihydroorotate (NAD(+) route): step 1/1. Responsible for channeling the electrons from the oxidation of dihydroorotate from the FMN redox center in the PyrD type B subunit to the ultimate electron acceptor NAD(+). The sequence is that of Probable dihydroorotate dehydrogenase B (NAD(+)), electron transfer subunit from Methanothermobacter thermautotrophicus (strain ATCC 29096 / DSM 1053 / JCM 10044 / NBRC 100330 / Delta H) (Methanobacterium thermoautotrophicum).